We begin with the raw amino-acid sequence, 558 residues long: 2-isopropylmalate synthase (558 aa).

The 274-residue stretch at 30–303 (PIWCSVDLRD…DPKLDFSNIP (274 aa)) folds into the Pyruvate carboxyltransferase domain. Aspartate 39, histidine 242, histidine 244, and asparagine 278 together coordinate Mg(2+). The interval 438 to 558 (LNNTLCVQDF…GLVSALNRII (121 aa)) is regulatory domain.

Belongs to the alpha-IPM synthase/homocitrate synthase family. LeuA type 2 subfamily. As to quaternary structure, homodimer. It depends on Mg(2+) as a cofactor.

The protein localises to the cytoplasm. The enzyme catalyses 3-methyl-2-oxobutanoate + acetyl-CoA + H2O = (2S)-2-isopropylmalate + CoA + H(+). The protein operates within amino-acid biosynthesis; L-leucine biosynthesis; L-leucine from 3-methyl-2-oxobutanoate: step 1/4. In terms of biological role, catalyzes the condensation of the acetyl group of acetyl-CoA with 3-methyl-2-oxobutanoate (2-ketoisovalerate) to form 3-carboxy-3-hydroxy-4-methylpentanoate (2-isopropylmalate). This is 2-isopropylmalate synthase from Helicobacter hepaticus (strain ATCC 51449 / 3B1).